A 441-amino-acid chain; its full sequence is Chromosome partition protein MukF (441 aa).

The segment at 208–236 (LTETSSTLRELQDTLEAAGDKLQTSLLSI) is leucine-zipper.

Belongs to the MukF family. As to quaternary structure, interacts, and probably forms a ternary complex, with MukE and MukB via its C-terminal region. The complex formation is stimulated by calcium or magnesium. It is required for an interaction between MukE and MukB.

Its subcellular location is the cytoplasm. It is found in the nucleoid. Its function is as follows. Involved in chromosome condensation, segregation and cell cycle progression. May participate in facilitating chromosome segregation by condensation DNA from both sides of a centrally located replisome during cell division. Not required for mini-F plasmid partitioning. Probably acts via its interaction with MukB and MukE. Overexpression results in anucleate cells. It has a calcium binding activity. The protein is Chromosome partition protein MukF of Pectobacterium atrosepticum (strain SCRI 1043 / ATCC BAA-672) (Erwinia carotovora subsp. atroseptica).